Consider the following 470-residue polypeptide: Light-independent protochlorophyllide reductase subunit N (470 aa).

Residues cysteine 22, cysteine 47, and cysteine 107 each contribute to the [4Fe-4S] cluster site.

The protein belongs to the BchN/ChlN family. Protochlorophyllide reductase is composed of three subunits; ChlL, ChlN and ChlB. Forms a heterotetramer of two ChlB and two ChlN subunits. [4Fe-4S] cluster is required as a cofactor.

The protein localises to the plastid. It localises to the chloroplast. The catalysed reaction is chlorophyllide a + oxidized 2[4Fe-4S]-[ferredoxin] + 2 ADP + 2 phosphate = protochlorophyllide a + reduced 2[4Fe-4S]-[ferredoxin] + 2 ATP + 2 H2O. Its pathway is porphyrin-containing compound metabolism; chlorophyll biosynthesis (light-independent). Functionally, component of the dark-operative protochlorophyllide reductase (DPOR) that uses Mg-ATP and reduced ferredoxin to reduce ring D of protochlorophyllide (Pchlide) to form chlorophyllide a (Chlide). This reaction is light-independent. The NB-protein (ChlN-ChlB) is the catalytic component of the complex. The sequence is that of Light-independent protochlorophyllide reductase subunit N from Pinus koraiensis (Korean pine).